Here is a 255-residue protein sequence, read N- to C-terminus: MAVGKNKRLSKGKKGLKKRAQDPFSRKDEYLVKAPSTFATRDVGKTIVNRTVGLKNANDSLKGRIFEVSLADLQNDQAHSFRKIKLRVDEVQGKNCLTNFHGMDFTSDKLRSLVRKWQSLIEANVTVKTTDDYLVRLFAIAFTKRRSFQVKKTTYARSSQIRAIRKKMVEIIQREASTRTLTQLTKLVPEVIGREIEKATRGIYPLQNVHIRKVKLLKQPKFDIGALLALHGESSTDDKGQKVEREFKEQVLESV.

Residues 1-18 are compositionally biased toward basic residues; sequence MAVGKNKRLSKGKKGLKK. Positions 1-22 are disordered; the sequence is MAVGKNKRLSKGKKGLKKRAQD. Ala2 carries the N-acetylalanine; partial modification.

The protein belongs to the eukaryotic ribosomal protein eS1 family. As to quaternary structure, component of the small ribosomal subunit. Mature ribosomes consist of a small (40S) and a large (60S) subunit. The 40S subunit contains about 33 different proteins and 1 molecule of RNA (18S). The 60S subunit contains about 49 different proteins and 3 molecules of RNA (25S, 5.8S and 5S).

It is found in the cytoplasm. The polypeptide is Small ribosomal subunit protein eS1 (Uncinocarpus reesii (strain UAMH 1704)).